We begin with the raw amino-acid sequence, 445 residues long: FAS-associated factor 2-B (445 aa).

The UBA domain occupies 12-48; it reads DQTEKLLQFQDLTGIESIDQCRQTLQQHNWNIETAVQ. Residues 275–353 are a coiled coil; that stretch reads SERLEREERN…ERKSECLPAE (79 aa). The tract at residues 302–355 is disordered; the sequence is RADQEKERKKKEKQDQKRREEEEAQRKQMLEERKKRNLEEEKERKSECLPAEPV. A compositionally biased stretch (basic and acidic residues) spans 303–348; that stretch reads ADQEKERKKKEKQDQKRREEEEAQRKQMLEERKKRNLEEEKERKSE. The region spanning 357 to 439 is the UBX domain; sequence DHPDNVKIIF…GLSQSQLLFV (83 aa).

The protein resides in the cytoplasm. It is found in the lipid droplet. The protein localises to the endoplasmic reticulum. Functionally, plays an important role in endoplasmic reticulum-associated degradation (ERAD) that mediates ubiquitin-dependent degradation of misfolded endoplasmic reticulum proteins. Involved in inhibition of lipid droplet degradation. Involved in stress granule disassembly. The polypeptide is FAS-associated factor 2-B (faf2-b) (Xenopus laevis (African clawed frog)).